The following is a 418-amino-acid chain: Histidine--tRNA ligase (418 aa).

Belongs to the class-II aminoacyl-tRNA synthetase family. Homodimer.

The protein localises to the cytoplasm. The enzyme catalyses tRNA(His) + L-histidine + ATP = L-histidyl-tRNA(His) + AMP + diphosphate + H(+). The chain is Histidine--tRNA ligase from Thermoanaerobacter pseudethanolicus (strain ATCC 33223 / 39E) (Clostridium thermohydrosulfuricum).